The primary structure comprises 169 residues: Large ribosomal subunit protein uL10 (169 aa).

Belongs to the universal ribosomal protein uL10 family. As to quaternary structure, part of the ribosomal stalk of the 50S ribosomal subunit. The N-terminus interacts with L11 and the large rRNA to form the base of the stalk. The C-terminus forms an elongated spine to which L12 dimers bind in a sequential fashion forming a multimeric L10(L12)X complex.

Functionally, forms part of the ribosomal stalk, playing a central role in the interaction of the ribosome with GTP-bound translation factors. In Rickettsia felis (strain ATCC VR-1525 / URRWXCal2) (Rickettsia azadi), this protein is Large ribosomal subunit protein uL10.